The primary structure comprises 228 residues: Superoxide dismutase [Mn], mitochondrial (228 aa).

The N-terminal 24 residues, 1 to 24 (MALRTLVSRRTLATGLGFRQQLRG), are a transit peptide targeting the mitochondrion. Mn(2+)-binding residues include His-52, His-100, Asp-189, and His-193.

The protein belongs to the iron/manganese superoxide dismutase family. Homotetramer. Mn(2+) is required as a cofactor.

It is found in the mitochondrion matrix. It catalyses the reaction 2 superoxide + 2 H(+) = H2O2 + O2. Destroys superoxide anion radicals which are normally produced within the cells and which are toxic to biological systems. The protein is Superoxide dismutase [Mn], mitochondrial (SODA) of Nicotiana plumbaginifolia (Leadwort-leaved tobacco).